A 206-amino-acid chain; its full sequence is 2,3-bisphosphoglycerate-dependent phosphoglycerate mutase (206 aa).

Substrate contacts are provided by residues arginine 9 to asparagine 16, threonine 22 to glycine 23, arginine 61, glutamate 88 to tyrosine 91, lysine 99, arginine 115 to arginine 116, and glycine 159 to asparagine 160. The Tele-phosphohistidine intermediate role is filled by histidine 10. Glutamate 88 serves as the catalytic Proton donor/acceptor.

Belongs to the phosphoglycerate mutase family. BPG-dependent PGAM subfamily. As to quaternary structure, homodimer.

It carries out the reaction (2R)-2-phosphoglycerate = (2R)-3-phosphoglycerate. It participates in carbohydrate degradation; glycolysis; pyruvate from D-glyceraldehyde 3-phosphate: step 3/5. In terms of biological role, catalyzes the interconversion of 2-phosphoglycerate and 3-phosphoglycerate. The polypeptide is 2,3-bisphosphoglycerate-dependent phosphoglycerate mutase (Mesorhizobium japonicum (strain LMG 29417 / CECT 9101 / MAFF 303099) (Mesorhizobium loti (strain MAFF 303099))).